A 133-amino-acid chain; its full sequence is ATP synthase epsilon chain (133 aa).

This sequence belongs to the ATPase epsilon chain family. In terms of assembly, F-type ATPases have 2 components, CF(1) - the catalytic core - and CF(0) - the membrane proton channel. CF(1) has five subunits: alpha(3), beta(3), gamma(1), delta(1), epsilon(1). CF(0) has three main subunits: a, b and c.

The protein resides in the cell membrane. Functionally, produces ATP from ADP in the presence of a proton gradient across the membrane. This Clostridium acetobutylicum (strain ATCC 824 / DSM 792 / JCM 1419 / IAM 19013 / LMG 5710 / NBRC 13948 / NRRL B-527 / VKM B-1787 / 2291 / W) protein is ATP synthase epsilon chain (atpC).